Reading from the N-terminus, the 410-residue chain is G-protein coupled receptor family C group 5 member B (410 aa).

The N-terminal stretch at 1–28 is a signal peptide; it reads MFLVLERKMRTHQVFPLPLLLVIASVAS. Over 29–56 the chain is Extracellular; sequence ENASTSRGCGLDLLPQYVSLCDLDAIWG. N-linked (GlcNAc...) asparagine glycosylation is present at asparagine 30. The chain crosses the membrane as a helical span at residues 57 to 77; it reads IVVEAVAGAGALITLLLMLIL. Topologically, residues 78–94 are cytoplasmic; the sequence is LVRLPFIKDKERKRPVC. Residues 95–115 traverse the membrane as a helical segment; the sequence is LHFLFLLGTLGLFGLTFAFII. The Extracellular portion of the chain corresponds to 116-126; sequence QMDETICSIRR. A helical transmembrane segment spans residues 127-147; sequence FLWGVLFALCFSCLLSQAWRV. Over 148 to 164 the chain is Cytoplasmic; it reads RRLVRQGTSPASWQLVS. The chain crosses the membrane as a helical span at residues 165 to 185; that stretch reads LALCLMLVQVIIATEWLVLTV. The Extracellular segment spans residues 186–199; it reads LRDTKPACAYEPMD. The helical transmembrane segment at 200 to 220 threads the bilayer; sequence FVMALIYDMVLLAITLAQSLF. At 221-234 the chain is on the cytoplasmic side; it reads TLCGKFKRWKVNGA. Residues 235 to 255 traverse the membrane as a helical segment; sequence FILVTTFLSALIWVVWMTMYL. Residues 256–271 lie on the Extracellular side of the membrane; sequence FGNSLIKQGDAWSDPT. The helical transmembrane segment at 272–292 threads the bilayer; that stretch reads LAITLAASGWVFVIFHAIPEI. The Cytoplasmic portion of the chain corresponds to 293–410; the sequence is HYTLLPPLQE…PPSHTGRHHW (118 aa). A Phosphoserine modification is found at serine 355. The interval 356–381 is disordered; that stretch reads LEQRSSSLGKKPSSLGNRPSAPFRSN. A compositionally biased stretch (low complexity) spans 360 to 371; the sequence is SSSLGKKPSSLG.

Belongs to the G-protein coupled receptor 3 family.

It is found in the cell membrane. The protein localises to the cytoplasmic vesicle membrane. Functionally, G-protein coupled receptor involved in the regulation of cell volume. The chain is G-protein coupled receptor family C group 5 member B (Gprc5b) from Mus musculus (Mouse).